Reading from the N-terminus, the 175-residue chain is Translation initiation factor IF-3 (175 aa).

This sequence belongs to the IF-3 family. In terms of assembly, monomer.

It is found in the cytoplasm. Functionally, IF-3 binds to the 30S ribosomal subunit and shifts the equilibrium between 70S ribosomes and their 50S and 30S subunits in favor of the free subunits, thus enhancing the availability of 30S subunits on which protein synthesis initiation begins. In Staphylococcus carnosus (strain TM300), this protein is Translation initiation factor IF-3.